The following is a 208-amino-acid chain: Ribosomal RNA small subunit methyltransferase G (208 aa).

S-adenosyl-L-methionine-binding positions include G73, L78, 127 to 128 (VE), and R141.

This sequence belongs to the methyltransferase superfamily. RNA methyltransferase RsmG family.

The protein resides in the cytoplasm. The enzyme catalyses guanosine(527) in 16S rRNA + S-adenosyl-L-methionine = N(7)-methylguanosine(527) in 16S rRNA + S-adenosyl-L-homocysteine. Specifically methylates the N7 position of guanine in position 527 of 16S rRNA. This is Ribosomal RNA small subunit methyltransferase G from Cereibacter sphaeroides (strain ATCC 17025 / ATH 2.4.3) (Rhodobacter sphaeroides).